A 175-amino-acid polypeptide reads, in one-letter code: Small ribosomal subunit protein uS5 (175 aa).

The 64-residue stretch at 19–82 (WQERVIQIRR…ADGKKHLIDI (64 aa)) folds into the S5 DRBM domain.

The protein belongs to the universal ribosomal protein uS5 family. In terms of assembly, part of the 30S ribosomal subunit. Contacts proteins S4 and S8.

Functionally, with S4 and S12 plays an important role in translational accuracy. Its function is as follows. Located at the back of the 30S subunit body where it stabilizes the conformation of the head with respect to the body. The sequence is that of Small ribosomal subunit protein uS5 from Nostoc punctiforme (strain ATCC 29133 / PCC 73102).